A 403-amino-acid polypeptide reads, in one-letter code: Serine/threonine transporter SstT (403 aa).

9 helical membrane-spanning segments follow: residues 14–34 (VTQI…APAI), 44–64 (VFVS…VMAS), 79–99 (ILWL…FASM), 138–158 (ALLN…GVAL), 175–195 (GVTL…FGLV), 214–234 (LAVL…LIVF), 295–315 (MAGA…TLGI), 327–347 (VVAA…LLLI), and 353–373 (LFGI…IIGV).

Belongs to the dicarboxylate/amino acid:cation symporter (DAACS) (TC 2.A.23) family.

It localises to the cell inner membrane. The enzyme catalyses L-serine(in) + Na(+)(in) = L-serine(out) + Na(+)(out). It catalyses the reaction L-threonine(in) + Na(+)(in) = L-threonine(out) + Na(+)(out). Involved in the import of serine and threonine into the cell, with the concomitant import of sodium (symport system). This Pseudomonas putida (strain ATCC 47054 / DSM 6125 / CFBP 8728 / NCIMB 11950 / KT2440) protein is Serine/threonine transporter SstT.